The chain runs to 257 residues: Phosphate import ATP-binding protein PstB (257 aa).

Residues 4–252 (LKLNDVNIYY…PDNKETEDYI (249 aa)) form the ABC transporter domain. Residue 36–43 (GPSGCGKS) participates in ATP binding.

Belongs to the ABC transporter superfamily. Phosphate importer (TC 3.A.1.7) family. In terms of assembly, the complex is composed of two ATP-binding proteins (PstB), two transmembrane proteins (PstC and PstA) and a solute-binding protein (PstS).

It is found in the cell membrane. It carries out the reaction phosphate(out) + ATP + H2O = ADP + 2 phosphate(in) + H(+). Part of the ABC transporter complex PstSACB involved in phosphate import. Responsible for energy coupling to the transport system. The protein is Phosphate import ATP-binding protein PstB of Corynebacterium efficiens (strain DSM 44549 / YS-314 / AJ 12310 / JCM 11189 / NBRC 100395).